A 150-amino-acid polypeptide reads, in one-letter code: 3-dehydroquinate dehydratase (150 aa).

The active-site Proton acceptor is the Tyr26. Substrate contacts are provided by Asn77, His83, and Asp90. His103 functions as the Proton donor in the catalytic mechanism. Substrate is bound by residues 104–105 (LS) and Arg114.

The protein belongs to the type-II 3-dehydroquinase family. In terms of assembly, homododecamer.

It catalyses the reaction 3-dehydroquinate = 3-dehydroshikimate + H2O. It participates in metabolic intermediate biosynthesis; chorismate biosynthesis; chorismate from D-erythrose 4-phosphate and phosphoenolpyruvate: step 3/7. Functionally, catalyzes a trans-dehydration via an enolate intermediate. In Pectobacterium atrosepticum (strain SCRI 1043 / ATCC BAA-672) (Erwinia carotovora subsp. atroseptica), this protein is 3-dehydroquinate dehydratase.